A 156-amino-acid chain; its full sequence is D-aminoacyl-tRNA deacylase (156 aa).

The short motif at 137–138 is the Gly-cisPro motif, important for rejection of L-amino acids element; that stretch reads GP.

It belongs to the DTD family. In terms of assembly, homodimer.

The protein localises to the cytoplasm. It catalyses the reaction glycyl-tRNA(Ala) + H2O = tRNA(Ala) + glycine + H(+). The enzyme catalyses a D-aminoacyl-tRNA + H2O = a tRNA + a D-alpha-amino acid + H(+). Its function is as follows. An aminoacyl-tRNA editing enzyme that deacylates mischarged D-aminoacyl-tRNAs. Also deacylates mischarged glycyl-tRNA(Ala), protecting cells against glycine mischarging by AlaRS. Acts via tRNA-based rather than protein-based catalysis; rejects L-amino acids rather than detecting D-amino acids in the active site. By recycling D-aminoacyl-tRNA to D-amino acids and free tRNA molecules, this enzyme counteracts the toxicity associated with the formation of D-aminoacyl-tRNA entities in vivo and helps enforce protein L-homochirality. In Dictyoglomus turgidum (strain DSM 6724 / Z-1310), this protein is D-aminoacyl-tRNA deacylase.